The chain runs to 810 residues: Chloride channel protein (810 aa).

Over 2–48 (SHEKNEASGNPEAQSWKAQEAMLGVKTEVSRWRAVKNCLYRHLVKVL) the chain is Cytoplasmic. A run of 2 helical transmembrane segments spans residues 49–86 (GEDWIFLLLLGALMALVSWAMDFIGSRGLRFYKYLFAM) and 93–116 (LQYLVWVCYPLILILFSSLFCQIV). A Selectivity filter part_1 motif is present at residues 122-126 (GSGIP). S123 is a binding site for chloride. An intramembrane region (helical) is located at residues 125-132 (IPELKTII). Helical transmembrane passes span 141–160 (LTLRTFVAKTVGLTVALSAG) and 166–184 (EGPFVHIASICATLLNQLL). Residues 164–168 (GKEGP) carry the Selectivity filter part_2 motif. 2 consecutive intramembrane regions (helical) follow at residues 201–213 (ILTVGCALGISCC) and 217–225 (PLAGVLFSI). The next 3 helical transmembrane spans lie at 237–254 (YWRGFLGGAFSAFIFRVL), 283–311 (LPAFAIIGIASGFFGALFVYLNRQIIVFM), and 320–339 (ILKKQRLIYPAVVTFVLATL). N365 is a glycosylation site (N-linked (GlcNAc...) asparagine). 2 helical membrane passes run 389-408 (NIFIVMALYFVMHFWMAALA) and 416-439 (GAFVPVFNLGAVLGRFVGELMALL). The short motif at 416 to 420 (GAFVP) is the Selectivity filter part_3 element. Residue F418 coordinates chloride. The segment at residues 456 to 470 (GEYAVIGAAAMTGAV) is an intramembrane region (helical). Positions 471-472 (TH) form an intramembrane region, note=Loop between two helices. The helical intramembrane region spans 473–484 (AVSTAVICFELT). Residues 485 to 489 (GQISH) constitute an intramembrane region (note=Loop between two helices). The chain crosses the membrane as a helical span at residues 490–506 (VLPMMVAVILANMVAQG). Residues 507–810 (LQPSLYDSII…RTATSNSSGK (304 aa)) are Cytoplasmic-facing. Residue Y512 participates in chloride binding. One can recognise a CBS 1 domain in the interval 543-601 (MVRDVTSIASTSTYGDLLHVLRQTKLKFFPFVDTPETNTLLGSIERTEVEGLLQRRISA). 2 disordered regions span residues 604 to 631 (RQPATAAEAEEEGRNGERGASFTGDVPG) and 658 to 688 (KVQTEDPRPPSPVPAEEPTQTSGIYQKKHKG). A CBS 2 domain is found at 724 to 781 (IDQSPFQLVEGTSLQKTHTLFSLLGLDRAYVTSMGKLVGVVALAEIQAAIEGSYQKGF).

The protein belongs to the chloride channel (TC 2.A.49) family. ClC-0 subfamily. As to quaternary structure, homodimer. Each subunit has channel activity ('Double barreled channel').

The protein localises to the membrane. Functionally, voltage-gated chloride channel. This channel is thought to ensure the high conductance of the non-innervated membrane of the electrocyte necessary for efficient current generation caused by sodium influx through the acetylcholine receptor at the innervated membrane. This Tetronarce californica (Pacific electric ray) protein is Chloride channel protein.